Consider the following 483-residue polypeptide: ATP synthase subunit beta (483 aa).

ATP is bound at residue 162-169; that stretch reads GGAGVGKT.

Belongs to the ATPase alpha/beta chains family. In terms of assembly, F-type ATPases have 2 components, CF(1) - the catalytic core - and CF(0) - the membrane proton channel. CF(1) has five subunits: alpha(3), beta(3), gamma(1), delta(1), epsilon(1). CF(0) has four main subunits: a(1), b(1), b'(1) and c(9-12).

The protein localises to the cellular thylakoid membrane. The enzyme catalyses ATP + H2O + 4 H(+)(in) = ADP + phosphate + 5 H(+)(out). Functionally, produces ATP from ADP in the presence of a proton gradient across the membrane. The catalytic sites are hosted primarily by the beta subunits. This chain is ATP synthase subunit beta, found in Synechocystis sp. (strain ATCC 27184 / PCC 6803 / Kazusa).